A 173-amino-acid chain; its full sequence is Acireductone dioxygenase (173 aa).

Positions 1-21 (MKFYYHDNDSSVDQCAPHDSG) are disordered. Residues His84, His86, Glu90, and His129 each coordinate Fe(2+). Ni(2+) contacts are provided by His84, His86, Glu90, and His129.

The protein belongs to the acireductone dioxygenase (ARD) family. The cofactor is Fe(2+). Ni(2+) is required as a cofactor.

The protein resides in the cytoplasm. The protein localises to the nucleus. The catalysed reaction is 1,2-dihydroxy-5-(methylsulfanyl)pent-1-en-3-one + O2 = 4-methylsulfanyl-2-oxobutanoate + formate + 2 H(+). It carries out the reaction 1,2-dihydroxy-5-(methylsulfanyl)pent-1-en-3-one + O2 = 3-(methylsulfanyl)propanoate + CO + formate + 2 H(+). Its pathway is amino-acid biosynthesis; L-methionine biosynthesis via salvage pathway; L-methionine from S-methyl-5-thio-alpha-D-ribose 1-phosphate: step 5/6. In terms of biological role, catalyzes 2 different reactions between oxygen and the acireductone 1,2-dihydroxy-3-keto-5-methylthiopentene (DHK-MTPene) depending upon the metal bound in the active site. Fe-containing acireductone dioxygenase (Fe-ARD) produces formate and 2-keto-4-methylthiobutyrate (KMTB), the alpha-ketoacid precursor of methionine in the methionine recycle pathway. Ni-containing acireductone dioxygenase (Ni-ARD) produces methylthiopropionate, carbon monoxide and formate, and does not lie on the methionine recycle pathway. This is Acireductone dioxygenase from Yarrowia lipolytica (strain CLIB 122 / E 150) (Yeast).